The chain runs to 129 residues: 3-oxo-4,17-pregnadiene-20-carboxyl-CoA hydratase beta subunit (129 aa).

It belongs to the thioester dehydratase family. Heterodimer composed of ChsH1 and ChsH2. Two heterodimers combine to form a heterotetramer. The complex interacts with Ltp2 via the DUF35 C-terminal region of ChsH2. The ChsH1-ChsH2-Ltp2 protein complex is composed of two protomers that form a heterohexameric structure through the Ltp2 dimerization interface.

The enzyme catalyses 3-oxochola-4,17-dien-22-oyl-CoA + H2O = 17-hydroxy-3-oxochol-4-en-22-oyl-CoA. The catalysed reaction is (2E)-octenoyl-CoA + H2O = 3-hydroxyoctanoyl-CoA. It carries out the reaction (2E)-decenoyl-CoA + H2O = 3-hydroxydecanoyl-CoA. It participates in steroid metabolism; cholesterol degradation. In the absence of the Ltp2 aldolase, ChsH1/ChsH2 can hydrate only about 30% of the 3-OPDC-CoA substrate. Complete turnover requires the presence of Ltp2. Functionally, involved in cholesterol side chain degradation. Catalyzes the hydration of 3-oxo-4,17-pregnadiene-20-carboxyl-CoA (3-OPDC-CoA) to form 17-hydroxy-3-oxo-4-pregnene-20-carboxyl-CoA (17-HOPC-CoA), in the modified beta-oxidation pathway for cholesterol side chain degradation. Can also use octenoyl-CoA and decenoyl-CoA, with lower efficiency. The sequence is that of 3-oxo-4,17-pregnadiene-20-carboxyl-CoA hydratase beta subunit from Mycobacterium tuberculosis (strain ATCC 25618 / H37Rv).